Reading from the N-terminus, the 176-residue chain is Large ribosomal subunit protein uL10 (176 aa).

Belongs to the universal ribosomal protein uL10 family. Part of the ribosomal stalk of the 50S ribosomal subunit. The N-terminus interacts with L11 and the large rRNA to form the base of the stalk. The C-terminus forms an elongated spine to which L12 dimers bind in a sequential fashion forming a multimeric L10(L12)X complex.

Forms part of the ribosomal stalk, playing a central role in the interaction of the ribosome with GTP-bound translation factors. The protein is Large ribosomal subunit protein uL10 (rplJ) of Streptomyces antibioticus.